The chain runs to 371 residues: Bifunctional chorismate mutase/prephenate dehydratase (371 aa).

The Chorismate mutase domain maps to 1–92 (MTLKNALLAF…DSVLTQKKWI (92 aa)). Substrate is bound by residues arginine 11, arginine 28, lysine 39, aspartate 48, glutamate 52, serine 84, and glutamine 88. One can recognise a Prephenate dehydratase domain in the interval 104–284 (KISFLGSFGS…NITQFIILAQ (181 aa)). The regulatory stretch occupies residues 285–371 (KKTYITNKKT…IKCIKILGCF (87 aa)).

The protein localises to the cytoplasm. It catalyses the reaction chorismate = prephenate. The enzyme catalyses prephenate + H(+) = 3-phenylpyruvate + CO2 + H2O. The protein operates within amino-acid biosynthesis; L-phenylalanine biosynthesis; phenylpyruvate from prephenate: step 1/1. It functions in the pathway metabolic intermediate biosynthesis; prephenate biosynthesis; prephenate from chorismate: step 1/1. Its function is as follows. Catalyzes the Claisen rearrangement of chorismate to prephenate and the decarboxylation/dehydration of prephenate to phenylpyruvate. This is Bifunctional chorismate mutase/prephenate dehydratase (pheA) from Buchnera aphidicola subsp. Baizongia pistaciae (strain Bp).